The primary structure comprises 211 residues: Ribosomal RNA small subunit methyltransferase G (211 aa).

Residues Gly-76, Leu-81, 127–128 (VE), and Arg-142 contribute to the S-adenosyl-L-methionine site.

It belongs to the methyltransferase superfamily. RNA methyltransferase RsmG family.

The protein localises to the cytoplasm. It catalyses the reaction guanosine(527) in 16S rRNA + S-adenosyl-L-methionine = N(7)-methylguanosine(527) in 16S rRNA + S-adenosyl-L-homocysteine. In terms of biological role, specifically methylates the N7 position of guanine in position 527 of 16S rRNA. The protein is Ribosomal RNA small subunit methyltransferase G of Vibrio campbellii (strain ATCC BAA-1116).